We begin with the raw amino-acid sequence, 209 residues long: A-type ATP synthase subunit D (209 aa).

It belongs to the V-ATPase D subunit family. As to quaternary structure, has multiple subunits with at least A(3), B(3), C, D, E, F, H, I and proteolipid K(x).

The protein localises to the cell membrane. In terms of biological role, component of the A-type ATP synthase that produces ATP from ADP in the presence of a proton gradient across the membrane. The sequence is that of A-type ATP synthase subunit D from Methanoregula boonei (strain DSM 21154 / JCM 14090 / 6A8).